Here is a 586-residue protein sequence, read N- to C-terminus: Serine/threonine-protein kinase TDA1 (586 aa).

Residues 1 to 26 (MTTASSSASQLQQRLPEEKPWPQLSG) are disordered. A Protein kinase domain is found at 39–351 (VTNHNSLGDG…AKNLKQHPFI (313 aa)). Residues 45–53 (LGDGNFSVV) and K68 contribute to the ATP site. The active-site Proton acceptor is the D180. The tract at residues 503–524 (TTPESRSNFNTPKTLSRQGSST) is disordered. T504 carries the phosphothreonine modification. S509 and S518 each carry phosphoserine. T538 carries the phosphothreonine modification. Phosphoserine is present on S578.

The protein belongs to the protein kinase superfamily. Ser/Thr protein kinase family. Interacts with RIM11.

It localises to the cytoplasm. The protein resides in the nucleus. It carries out the reaction L-seryl-[protein] + ATP = O-phospho-L-seryl-[protein] + ADP + H(+). It catalyses the reaction L-threonyl-[protein] + ATP = O-phospho-L-threonyl-[protein] + ADP + H(+). Serine/threonine protein kinase shown to have protein phosphorylation activity in vitro. This is Serine/threonine-protein kinase TDA1 (TDA1) from Saccharomyces cerevisiae (strain ATCC 204508 / S288c) (Baker's yeast).